Reading from the N-terminus, the 226-residue chain is DnaJ homolog subfamily C member 30, mitochondrial (226 aa).

The transit peptide at 1-38 directs the protein to the mitochondrion; that stretch reads MAAMRWRWWQRLLPWRLLQARGFPQNSAPSLGLGARTY. The 66-residue stretch at 49–114 folds into the J domain; that stretch reads ALYDLLGVPS…TLRRKYDRGL (66 aa). The tract at residues 116-157 is disordered; the sequence is SDEDLRGPGVRPSRTPAPDPGSPRTPPPTSRTHDGSRASPGA. The span at 130-144 shows a compositional bias: pro residues; that stretch reads TPAPDPGSPRTPPPT. A helical membrane pass occupies residues 208–225; that stretch reads DTAAIFLIFSIFIIIGFY.

Associates with the ATP synthase complex. Interacts with MT-ATP6; interaction is direct. Interacts with ATP5MC2; interaction is direct. As to expression, expressed in brain, heart, kidney, liver, lung, spleen, stomach and testis. Highly expressed in the brain. In the neocortex, expressed in most, if not all, glutamatergic excitatory projection neurons (pyramidal) and many interneurons, with the strongest signal noticeably in large pyramidal neurons of layer 3C. Also present in pyramidal neurons of layer 3C PNs of the superior temporal cortex, as well as in pyramidal neurons (Betz cells) of the layer 5B primary motor cortex (at protein level).

Its subcellular location is the mitochondrion inner membrane. In terms of biological role, mitochondrial protein enriched in neurons that acts as a regulator of mitochondrial respiration. Associates with the ATP synthase complex and facilitates ATP synthesis. May be a chaperone protein involved in the turnover of the subunits of mitochondrial complex I N-module. It facilitates the degradation of N-module subunits damaged by oxidative stress, and contributes to complex I functional efficiency. This Homo sapiens (Human) protein is DnaJ homolog subfamily C member 30, mitochondrial.